The following is a 2193-amino-acid chain: Genome polyprotein (2193 aa).

Residues methionine 1 to glycine 22 form a disordered region. Glycine 2 carries the N-myristoyl glycine; by host lipid modification. Residues glycine 2–glutamine 1503 are Cytoplasmic-facing. Amphipathic alpha-helix stretches follow at residues glycine 566–alanine 588 and arginine 568–alanine 588. Catalysis depends on for protease 2A activity residues histidine 883 and aspartate 901. Cysteine 918 and cysteine 920 together coordinate Zn(2+). Cysteine 972 acts as the For protease 2A activity in catalysis. The Zn(2+) site is built by cysteine 978 and histidine 980. A membrane-binding region spans residues serine 1112–leucine 1184. The segment at serine 1112–threonine 1250 is oligomerization. Positions phenylalanine 1133–serine 1137 are RNA-binding. The 159-residue stretch at glutamate 1216 to alanine 1374 folds into the SF3 helicase domain. Glycine 1240 to serine 1247 serves as a coordination point for ATP. Cysteine 1381, cysteine 1392, and cysteine 1397 together coordinate Zn(2+). The segment at cysteine 1381–cysteine 1397 adopts a C4-type; degenerate zinc-finger fold. The interval glutamate 1424–isoleucine 1431 is RNA-binding. An oligomerization region spans residues isoleucine 1435–glutamine 1440. An intramembrane segment occupies serine 1504–tyrosine 1519. The Cytoplasmic portion of the chain corresponds to lysine 1520 to phenylalanine 2193. An O-(5'-phospho-RNA)-tyrosine modification is found at tyrosine 1529. Residues glycine 1549–phenylalanine 1727 form the Peptidase C3 domain. Active-site for protease 3C activity residues include histidine 1588, glutamate 1619, and cysteine 1695. Positions glycine 1958–leucine 2073 constitute a RdRp catalytic domain. Residues aspartate 1964 and aspartate 2060 each coordinate Mg(2+).

This sequence belongs to the picornaviruses polyprotein family. In terms of assembly, interacts with capsid protein VP1 and capsid protein VP3 to form heterotrimeric protomers. Interacts with capsid protein VP0, and capsid protein VP3 to form heterotrimeric protomers. Five protomers subsequently associate to form pentamers which serve as building blocks for the capsid. Interacts with capsid protein VP2, capsid protein VP3 and capsid protein VP4 following cleavage of capsid protein VP0. Interacts with host SCARB2. Interacts with host ARF6; this interaction mediates viral endocytosis. As to quaternary structure, interacts with capsid protein VP1 and capsid protein VP3 in the mature capsid. Interacts with host SCARB2. In terms of assembly, interacts with capsid protein VP0 and capsid protein VP1 to form heterotrimeric protomers. Five protomers subsequently associate to form pentamers which serve as building blocks for the capsid. Interacts with capsid protein VP4 in the mature capsid. Interacts with protein 2C; this interaction may be important for virion morphogenesis. Interacts with capsid protein VP1 and capsid protein VP3. As to quaternary structure, homodimer. Interacts with host SPOP; this interaction promotes protease 2A ubiquitination and subsequent degradation. In terms of assembly, interacts with host BAX; this interaction activates the mitochondrial apoptotic pathway. Interacts with host ILF2. Homohexamer; forms a hexameric ring structure with 6-fold symmetry characteristic of AAA+ ATPases. Interacts (via N-terminus) with host RTN3 (via reticulon domain); this interaction is important for viral replication. Interacts with capsid protein VP3; this interaction may be important for virion morphogenesis. As to quaternary structure, interacts with protein 3CD. In terms of assembly, homodimer. Interacts with host GBF1. Interacts (via GOLD domain) with host ACBD3 (via GOLD domain); this interaction allows the formation of a viral protein 3A/ACBD3 heterotetramer with a 2:2 stoichiometry, which will stimulate the recruitment of host PI4KB in order to synthesize PI4P at the viral RNA replication sites. Interacts with RNA-directed RNA polymerase. As to quaternary structure, interacts with host IFIH1/MDA5; this interaction inhibits host IFIH1. Interacts with host RIGI. In terms of assembly, interacts with protein 3AB and with RNA-directed RNA polymerase. Interacts with host PPP1R15A. Interacts with Viral protein genome-linked and with protein 3CD. Interacts with host NLRP3. Mg(2+) serves as cofactor. Specific enzymatic cleavages in vivo by the viral proteases yield processing intermediates and the mature proteins. In terms of processing, myristoylation is required for the formation of pentamers during virus assembly. Further assembly of 12 pentamers and a molecule of genomic RNA generates the provirion. Post-translationally, during virion maturation, immature virions are rendered infectious following cleavage of VP0 into VP4 and VP2. This maturation seems to be an autocatalytic event triggered by the presence of RNA in the capsid and it is followed by a conformational change infectious virion. Myristoylation is required during RNA encapsidation and formation of the mature virus particle. In terms of processing, VPg is uridylylated by the polymerase into VPg-pUpU. This acts as a nucleotide-peptide primer for the genomic RNA replication.

It is found in the virion. Its subcellular location is the host cytoplasm. The protein localises to the host cytoplasmic vesicle membrane. It localises to the host nucleus. It carries out the reaction a ribonucleoside 5'-triphosphate + H2O = a ribonucleoside 5'-diphosphate + phosphate + H(+). It catalyses the reaction Selective cleavage of Tyr-|-Gly bond in the picornavirus polyprotein.. The enzyme catalyses RNA(n) + a ribonucleoside 5'-triphosphate = RNA(n+1) + diphosphate. The catalysed reaction is Selective cleavage of Gln-|-Gly bond in the poliovirus polyprotein. In other picornavirus reactions Glu may be substituted for Gln, and Ser or Thr for Gly.. With respect to regulation, replication or transcription is subject to high level of random mutations by the nucleotide analog ribavirin. Functionally, forms an icosahedral capsid of pseudo T=3 symmetry with capsid proteins VP2 and VP3. The capsid is 300 Angstroms in diameter, composed of 60 copies of each capsid protein and enclosing the viral positive strand RNA genome. Capsid protein VP1 mainly forms the vertices of the capsid. Capsid protein VP1, together with VP2, interacts with host cell receptor SCARB2 to provide virion attachment to target host cells. This attachment induces virion internalization predominantly through clathrin-dependent endocytosis. After binding to its receptor, the capsid undergoes conformational changes. Capsid protein VP1 N-terminus (that contains an amphipathic alpha-helix) and capsid protein VP4 are externalized. Together, they shape a pore in the host membrane through which viral genome is translocated to host cell cytoplasm. Forms an icosahedral capsid of pseudo T=3 symmetry with capsid proteins VP2 and VP3. The capsid is 300 Angstroms in diameter, composed of 60 copies of each capsid protein and enclosing the viral positive strand RNA genome. Capsid protein VP2, together with VP1, interacts with host cell receptor SCARB2 to provide virion attachment to target host cells. In terms of biological role, forms an icosahedral capsid of pseudo T=3 symmetry with capsid proteins VP2 and VP3. The capsid is 300 Angstroms in diameter, composed of 60 copies of each capsid protein and enclosing the viral positive strand RNA genome. Its function is as follows. Lies on the inner surface of the capsid shell. After binding to the host receptor, the capsid undergoes conformational changes. Capsid protein VP4 is released, Capsid protein VP1 N-terminus is externalized, and together, they shape a pore in the host membrane through which the viral genome is translocated into the host cell cytoplasm. Functionally, component of immature procapsids, which is cleaved into capsid proteins VP4 and VP2 after maturation. Allows the capsid to remain inactive before the maturation step. Cysteine protease that cleaves viral polyprotein and specific host proteins. It is responsible for the autocatalytic cleavage between the P1 and P2 regions, which is the first cleavage occurring in the polyprotein. Also cleaves the host translation initiation factor EIF4G1, in order to shut down the capped cellular mRNA translation. Inhibits the host nucleus-cytoplasm protein and RNA trafficking by cleaving host members of the nuclear pores. Counteracts stress granule formation probably by antagonizing its assembly or promoting its dissassembly. Cleaves and inhibits host IFIH1/MDA5, thereby inhibiting the type-I IFN production and the establishment of the antiviral state. Cleaves and inhibits host MAVS, thereby inhibiting the type-I IFN production and the establishment of the antiviral state. In terms of biological role, plays an essential role in the virus replication cycle by acting as a viroporin. Creates a pore in the host endoplasmic reticulum and as a consequence releases Ca2+ in the cytoplasm of infected cell. In turn, high levels of cytoplasmic calcium may trigger membrane trafficking and transport of viral ER-associated proteins to viroplasms, sites of viral genome replication. Also activates the mitochondrial apoptotic pathway by activating host BAX. Its function is as follows. Induces and associates with structural rearrangements of intracellular membranes. Displays RNA-binding, nucleotide binding and NTPase activities. May play a role in virion morphogenesis and viral RNA encapsidation by interacting with the capsid protein VP3. Functionally, localizes the viral replication complex to the surface of membranous vesicles. Together with protein 3CD binds the Cis-Active RNA Element (CRE) which is involved in RNA synthesis initiation. Acts as a cofactor to stimulate the activity of 3D polymerase, maybe through a nucleid acid chaperone activity. Localizes the viral replication complex to the surface of membranous vesicles. It inhibits host cell endoplasmic reticulum-to-Golgi apparatus transport and causes the disassembly of the Golgi complex, possibly through GBF1 interaction. This would result in depletion of MHC, trail receptors and IFN receptors at the host cell surface. Plays an essential role in viral RNA replication by recruiting ACBD3 and PI4KB at the viral replication sites, thereby allowing the formation of the rearranged membranous structures where viral replication takes place. In terms of biological role, acts as a primer for viral RNA replication and remains covalently bound to viral genomic RNA. VPg is uridylylated prior to priming replication into VPg-pUpU. The oriI viral genomic sequence may act as a template for this. The VPg-pUpU is then used as primer on the genomic RNA poly(A) by the RNA-dependent RNA polymerase to replicate the viral genome. During genome replication, the VPg-RNA linkage is removed by the host TDP2, thereby accelerating replication. During the late stage of the replication cycle, host TDP2 is excluded from sites of viral RNA synthesis and encapsidation, allowing for the generation of progeny virions. Its function is as follows. Involved in the viral replication complex and viral polypeptide maturation. It exhibits protease activity with a specificity and catalytic efficiency that is different from protease 3C. Protein 3CD lacks polymerase activity. Protein 3CD binds to the 5'UTR of the viral genome. Regulates host protein expression by interacting with host PPP1R15A to support viral replication. Functionally, major viral protease that mediates proteolytic processing of the polyprotein. Cleaves host EIF5B, contributing to host translation shutoff. Also cleaves host PABPC1, contributing to host translation shutoff. Disassembles host cytoplasmic stress granules by cleaving host G3BP1, although this effect is less prononced than the inhibition induced by protease 2A. Cleaves host RIGI and thus contributes to the inhibition of type I interferon production. Cleaves host IRF7 and thus contributes to the inhibition of type I interferon production. Cleaves host HNRNPA1 thereby increasing the translation of apoptosis protease activating factor APAF1, leading to apoptosis of the host cell. Cleaves host NLRP1, triggers host N-glycine-mediated degradation of the autoinhibitory NLRP1 N-terminal fragment. Cleaves and inactivates host GSDMD, preventing GSDMD-mediated pyroptosis. Also promotes apoptosis in infected cell through cleaving of host PINX1, a telomere binding protein in order to facilitate viral release. Impairs host PML-NBs production via PML cleavage and counter its antiviral activities. Replicates the viral genomic RNA on the surface of intracellular membranes. May form linear arrays of subunits that propagate along a strong head-to-tail interaction called interface-I. Covalently attaches UMP to a tyrosine of VPg, which is used to prime RNA synthesis. The positive stranded RNA genome is first replicated at virus induced membranous vesicles, creating a dsRNA genomic replication form. This dsRNA is then used as template to synthesize positive stranded RNA genomes. ss(+)RNA genomes are either translated, replicated or encapsidated. Facilitates the assembly of NLRP3 inflammasome complex and stimulates the cleavage of host pro-CASP1 and the secretion of IL-1beta. The polypeptide is Genome polyprotein (Human enterovirus 71 (strain USA/BrCr/1970) (EV71)).